The sequence spans 266 residues: 3-methyl-2-oxobutanoate hydroxymethyltransferase (266 aa).

Mg(2+) is bound by residues D45 and D84. 3-methyl-2-oxobutanoate contacts are provided by residues 45-46 (DS), D84, and K112. E114 contributes to the Mg(2+) binding site. E181 serves as the catalytic Proton acceptor.

This sequence belongs to the PanB family. As to quaternary structure, homodecamer; pentamer of dimers. The cofactor is Mg(2+).

The protein resides in the cytoplasm. The enzyme catalyses 3-methyl-2-oxobutanoate + (6R)-5,10-methylene-5,6,7,8-tetrahydrofolate + H2O = 2-dehydropantoate + (6S)-5,6,7,8-tetrahydrofolate. It participates in cofactor biosynthesis; (R)-pantothenate biosynthesis; (R)-pantoate from 3-methyl-2-oxobutanoate: step 1/2. Its function is as follows. Catalyzes the reversible reaction in which hydroxymethyl group from 5,10-methylenetetrahydrofolate is transferred onto alpha-ketoisovalerate to form ketopantoate. This is 3-methyl-2-oxobutanoate hydroxymethyltransferase from Pseudomonas putida (strain ATCC 700007 / DSM 6899 / JCM 31910 / BCRC 17059 / LMG 24140 / F1).